The chain runs to 241 residues: NAD-dependent protein deacetylase 2 (241 aa).

The region spanning 1-241 (MTGKPLVAIL…ALPALLRGLG (241 aa)) is the Deacetylase sirtuin-type domain. Positions 13, 17, 25, 92, 94, 95, and 112 each coordinate NAD(+). Val-94 and Asp-95 together coordinate nicotinamide. The Proton acceptor role is filled by His-112. Zn(2+)-binding residues include Cys-120, Cys-123, Cys-145, and Cys-148. NAD(+) is bound by residues Thr-186, Ser-187, Asn-211, and Ile-229.

This sequence belongs to the sirtuin family. Class U subfamily. Zn(2+) is required as a cofactor.

Its subcellular location is the cytoplasm. The enzyme catalyses N(6)-acetyl-L-lysyl-[protein] + NAD(+) + H2O = 2''-O-acetyl-ADP-D-ribose + nicotinamide + L-lysyl-[protein]. Its function is as follows. NAD-dependent protein deacetylase which modulates the activities of several enzymes which are inactive in their acetylated form. In Streptomyces coelicolor (strain ATCC BAA-471 / A3(2) / M145), this protein is NAD-dependent protein deacetylase 2.